The primary structure comprises 205 residues: MNEQLHNRTMAFAGILQAIAQVQHLARHGESDTDELAASLNTILVTNPESAADVYQDKAALHKGYKLVLNQLGDSSQKDVEITRYLVGILALERKLTRSNSGLAMLAERINQVNRQLHHFAITDEQVIANLASIYSDIISNLGPKIQISGNPLCLQRPIVQHKIRALLLAAMRSAVLWRQLGGKRRHLVFARKAIIDTAKKSLTL.

This sequence belongs to the HflD family.

The protein resides in the cytoplasm. It localises to the cell inner membrane. This is High frequency lysogenization protein HflD homolog from Shewanella sp. (strain MR-7).